The primary structure comprises 159 residues: Cytochrome c-type biogenesis protein CcmE (159 aa).

Residues Met-1–Arg-23 lie on the Cytoplasmic side of the membrane. The helical; Signal-anchor for type II membrane protein transmembrane segment at Leu-24–Ala-44 threads the bilayer. Over Met-45–Lys-159 the chain is Periplasmic. His-138 and Tyr-142 together coordinate heme.

It belongs to the CcmE/CycJ family.

Its subcellular location is the cell inner membrane. In terms of biological role, heme chaperone required for the biogenesis of c-type cytochromes. Transiently binds heme delivered by CcmC and transfers the heme to apo-cytochromes in a process facilitated by CcmF and CcmH. The chain is Cytochrome c-type biogenesis protein CcmE from Bartonella tribocorum (strain CIP 105476 / IBS 506).